Here is a 338-residue protein sequence, read N- to C-terminus: RNA 3'-terminal phosphate cyclase (338 aa).

ATP is bound by residues glutamine 103 and 283–287; that span reads YLADQ. The active-site Tele-AMP-histidine intermediate is histidine 308.

Belongs to the RNA 3'-terminal cyclase family. Type 1 subfamily.

The protein resides in the cytoplasm. It catalyses the reaction a 3'-end 3'-phospho-ribonucleotide-RNA + ATP = a 3'-end 2',3'-cyclophospho-ribonucleotide-RNA + AMP + diphosphate. Its function is as follows. Catalyzes the conversion of 3'-phosphate to a 2',3'-cyclic phosphodiester at the end of RNA. The mechanism of action of the enzyme occurs in 3 steps: (A) adenylation of the enzyme by ATP; (B) transfer of adenylate to an RNA-N3'P to produce RNA-N3'PP5'A; (C) and attack of the adjacent 2'-hydroxyl on the 3'-phosphorus in the diester linkage to produce the cyclic end product. The biological role of this enzyme is unknown but it is likely to function in some aspects of cellular RNA processing. The polypeptide is RNA 3'-terminal phosphate cyclase (Shigella sonnei (strain Ss046)).